The sequence spans 154 residues: Proteasome subunit beta type-4 (154 aa).

At M1 the chain carries N-acetylmethionine. Residues 1-45 (MESILESRSGHWAGGPAPGQFYRIPPTPGSIVDPXSVLYGSPITR) constitute a propeptide that is removed on maturation. Y102 bears the Phosphotyrosine mark.

Belongs to the peptidase T1B family. In terms of assembly, the 26S proteasome consists of a 20S proteasome core and two 19S regulatory subunits. The 20S proteasome core is a barrel-shaped complex made of 28 subunits that are arranged in four stacked rings. The two outer rings are each formed by seven alpha subunits, and the two inner rings are formed by seven beta subunits. The proteolytic activity is exerted by three beta-subunits PSMB5, PSMB6 and PSMB7. Forms a ternary complex with SMAD1 and OAZ1 before PSMB4 is incorporated into the 20S proteasome. Interacts with PRPF19.

The protein resides in the cytoplasm. It localises to the nucleus. Functionally, non-catalytic component of the 20S core proteasome complex involved in the proteolytic degradation of most intracellular proteins. This complex plays numerous essential roles within the cell by associating with different regulatory particles. Associated with two 19S regulatory particles, forms the 26S proteasome and thus participates in the ATP-dependent degradation of ubiquitinated proteins. The 26S proteasome plays a key role in the maintenance of protein homeostasis by removing misfolded or damaged proteins that could impair cellular functions, and by removing proteins whose functions are no longer required. Associated with the PA200 or PA28, the 20S proteasome mediates ubiquitin-independent protein degradation. This type of proteolysis is required in several pathways including spermatogenesis (20S-PA200 complex) or generation of a subset of MHC class I-presented antigenic peptides (20S-PA28 complex). SMAD1/OAZ1/PSMB4 complex mediates the degradation of the CREBBP/EP300 repressor SNIP1. This Sus scrofa (Pig) protein is Proteasome subunit beta type-4 (PSMB4).